Consider the following 520-residue polypeptide: DDB1- and CUL4-associated factor 17 (520 aa).

The next 2 helical transmembrane spans lie at 186–206 (VLLYLAVFRVLPFSLVGILEI) and 222–242 (GILIVMYSSGLVRLYSFQTIA).

As to quaternary structure, interacts with DDB1, CUL4A and CUL4B. As to expression, ubiquitously expressed.

The protein resides in the membrane. It localises to the nucleus. It is found in the nucleolus. It participates in protein modification; protein ubiquitination. Functionally, may function as a substrate receptor for CUL4-DDB1 E3 ubiquitin-protein ligase complex. The chain is DDB1- and CUL4-associated factor 17 (DCAF17) from Homo sapiens (Human).